Consider the following 112-residue polypeptide: Putative pterin-4-alpha-carbinolamine dehydratase (112 aa).

The protein belongs to the pterin-4-alpha-carbinolamine dehydratase family.

The enzyme catalyses (4aS,6R)-4a-hydroxy-L-erythro-5,6,7,8-tetrahydrobiopterin = (6R)-L-erythro-6,7-dihydrobiopterin + H2O. This Shewanella oneidensis (strain ATCC 700550 / JCM 31522 / CIP 106686 / LMG 19005 / NCIMB 14063 / MR-1) protein is Putative pterin-4-alpha-carbinolamine dehydratase.